Reading from the N-terminus, the 671-residue chain is DNA ligase (671 aa).

NAD(+) is bound by residues 31–35 (DAEYD), 80–81 (SL), and Glu-110. The active-site N6-AMP-lysine intermediate is the Lys-112. Arg-133, Glu-167, Lys-283, and Lys-307 together coordinate NAD(+). Positions 401, 404, 419, and 424 each coordinate Zn(2+). Residues 587–671 (EEELVFTGKT…YLPDEGGLNE (85 aa)) form the BRCT domain.

Belongs to the NAD-dependent DNA ligase family. LigA subfamily. The cofactor is Mg(2+). It depends on Mn(2+) as a cofactor.

The catalysed reaction is NAD(+) + (deoxyribonucleotide)n-3'-hydroxyl + 5'-phospho-(deoxyribonucleotide)m = (deoxyribonucleotide)n+m + AMP + beta-nicotinamide D-nucleotide.. Functionally, DNA ligase that catalyzes the formation of phosphodiester linkages between 5'-phosphoryl and 3'-hydroxyl groups in double-stranded DNA using NAD as a coenzyme and as the energy source for the reaction. It is essential for DNA replication and repair of damaged DNA. In Listeria monocytogenes serotype 4b (strain F2365), this protein is DNA ligase.